A 230-amino-acid polypeptide reads, in one-letter code: Heptaprenylglyceryl phosphate synthase (230 aa).

Lys-12 contacts sn-glycerol 1-phosphate. Mg(2+) is bound by residues Asp-14 and Thr-40. Sn-glycerol 1-phosphate-binding positions include 159 to 164 (YIEYSG), Gly-189, and 209 to 210 (GD).

This sequence belongs to the GGGP/HepGP synthase family. Group I subfamily. In terms of assembly, homodimer. Mg(2+) serves as cofactor.

The enzyme catalyses sn-glycerol 1-phosphate + all-trans-heptaprenyl diphosphate = 3-heptaprenyl-sn-glycero-1-phosphate + diphosphate. Its pathway is membrane lipid metabolism; glycerophospholipid metabolism. Its function is as follows. Prenyltransferase that catalyzes in vivo the transfer of the heptaprenyl moiety of heptaprenyl pyrophosphate (HepPP; 35 carbon atoms) to the C3 hydroxyl of sn-glycerol-1-phosphate (G1P), producing heptaprenylglyceryl phosphate (HepGP). This reaction is an ether-bond-formation step in the biosynthesis of archaea-type G1P-based membrane lipids found in Bacillales. In Staphylococcus aureus (strain USA300), this protein is Heptaprenylglyceryl phosphate synthase.